A 602-amino-acid polypeptide reads, in one-letter code: Zinc finger MYND domain-containing protein 11 (602 aa).

In terms of domain architecture, SAMD1-like winged helix (WH) spans 6–82 (KRRQADTKAI…CKGSKAGIEQ (77 aa)). The PHD-type zinc finger occupies 100–148 (DWYCFECHLPGEVLICDLCFRVYHSKCLSDEFRLRDSSSPWQCPVCRSI). The region spanning 149–255 (KKKNTNKQEM…KDTCHELDEL (107 aa)) is the Bromo domain. Positions 258, 261, 277, and 281 each coordinate Zn(2+). The region spanning 280–331 (NHELVWAKMKGFGFWPAKVMQKEDNQVDVRFFGHHHQRAWIPSENIQDITVN) is the PWWP domain. Lysine 366 participates in a covalent cross-link: Glycyl lysine isopeptide (Lys-Gly) (interchain with G-Cter in SUMO2). Residues 366–459 (KNEDRGEEEA…MLHRSTQTTN (94 aa)) are disordered. Positions 394–400 (RAKKGRR) match the Nuclear localization signal motif. Residues lysine 407 and lysine 408 each participate in a glycyl lysine isopeptide (Lys-Gly) (interchain with G-Cter in SUMO2) cross-link. The residue at position 421 (serine 421) is a Phosphoserine. Over residues 435 to 459 (SVSTQTKKLSASSPRMLHRSTQTTN) the composition is skewed to polar residues. The segment at 452–572 (HRSTQTTNDG…CYNCEEEAMY (121 aa)) is interaction with human adenovirus E1A. Residues cysteine 563, cysteine 566, cysteine 574, cysteine 575, cysteine 581, cysteine 585, histidine 594, and cysteine 598 each coordinate Zn(2+). Residues 563–598 (CYNCEEEAMYHCCWNTSYCSIKCQQEHWHAEHKRTC) form an MYND-type zinc finger.

As to quaternary structure, homooligomer; forms homooligomers via its C-terminus. Interacts with histone H3.3 trimethylated at 'Lys-36' (H3.3K36me3). Interacts (via MYND-type zinc finger) with NCOR1. Interacts (via MYND-type zinc finger) with MGA protein (via PXLXP motif). Interacts (via MYND-type zinc finger) with EZH2. Interacts with EMSY and E2F6. Interacts with PIAS1 and UBE2I. (Microbial infection) Interacts (via MYND-type zinc finger) with human adenovirus early E1A protein (via PXLXP motif); this interaction inhibits E1A mediated transactivation. In terms of assembly, (Microbial infection) Interacts (via MYND-type zinc finger) with Epstein-Barr virus EBNA2 protein (via PXLXP motif). Interacts with Epstein-Barr virus-derived protein LMP1; leading to negatively regulate NF-kappa-B activation by Epstein-Barr virus-derived protein LMP1. Sumoylated following its interaction with PIAS1 and UBE2I. In terms of processing, ubiquitinated, leading to proteasomal degradation. Ubiquitous.

Its subcellular location is the nucleus. It is found in the chromosome. In terms of biological role, chromatin reader that specifically recognizes and binds histone H3.3 trimethylated at 'Lys-36' (H3.3K36me3) and regulates RNA polymerase II elongation. Does not bind other histone H3 subtypes (H3.1 or H3.2). Colocalizes with highly expressed genes and functions as a transcription corepressor by modulating RNA polymerase II at the elongation stage. Binds non-specifically to dsDNA. Acts as a tumor-suppressor by repressing a transcriptional program essential for tumor cell growth. Its function is as follows. (Microbial infection) Inhibits Epstein-Barr virus EBNA2-mediated transcriptional activation and host cell proliferation, through direct interaction. The polypeptide is Zinc finger MYND domain-containing protein 11 (Homo sapiens (Human)).